A 425-amino-acid polypeptide reads, in one-letter code: UDP-N-acetylglucosamine 1-carboxyvinyltransferase (425 aa).

23–24 serves as a coordination point for phosphoenolpyruvate; sequence KN. R100 serves as a coordination point for UDP-N-acetyl-alpha-D-glucosamine. C124 functions as the Proton donor in the catalytic mechanism. C124 is subject to 2-(S-cysteinyl)pyruvic acid O-phosphothioketal. Residues 169–172, D313, and V335 contribute to the UDP-N-acetyl-alpha-D-glucosamine site; that span reads KVSV.

It belongs to the EPSP synthase family. MurA subfamily.

Its subcellular location is the cytoplasm. The enzyme catalyses phosphoenolpyruvate + UDP-N-acetyl-alpha-D-glucosamine = UDP-N-acetyl-3-O-(1-carboxyvinyl)-alpha-D-glucosamine + phosphate. It participates in cell wall biogenesis; peptidoglycan biosynthesis. Cell wall formation. Adds enolpyruvyl to UDP-N-acetylglucosamine. This chain is UDP-N-acetylglucosamine 1-carboxyvinyltransferase, found in Wolbachia pipientis subsp. Culex pipiens (strain wPip).